Reading from the N-terminus, the 375-residue chain is Erythronate-4-phosphate dehydrogenase (375 aa).

Substrate-binding residues include Ser45 and Thr66. Residues Asp146 and Thr175 each contribute to the NAD(+) site. Arg208 is a catalytic residue. Asp232 is an NAD(+) binding site. Residue Glu237 is part of the active site. The active-site Proton donor is His254. Gly257 contacts NAD(+). Residue Tyr258 participates in substrate binding.

It belongs to the D-isomer specific 2-hydroxyacid dehydrogenase family. PdxB subfamily. Homodimer.

Its subcellular location is the cytoplasm. The enzyme catalyses 4-phospho-D-erythronate + NAD(+) = (R)-3-hydroxy-2-oxo-4-phosphooxybutanoate + NADH + H(+). The protein operates within cofactor biosynthesis; pyridoxine 5'-phosphate biosynthesis; pyridoxine 5'-phosphate from D-erythrose 4-phosphate: step 2/5. Its function is as follows. Catalyzes the oxidation of erythronate-4-phosphate to 3-hydroxy-2-oxo-4-phosphonooxybutanoate. The protein is Erythronate-4-phosphate dehydrogenase of Edwardsiella ictaluri (strain 93-146).